A 186-amino-acid chain; its full sequence is Ribosome-recycling factor (186 aa).

This sequence belongs to the RRF family.

Its subcellular location is the cytoplasm. Functionally, responsible for the release of ribosomes from messenger RNA at the termination of protein biosynthesis. May increase the efficiency of translation by recycling ribosomes from one round of translation to another. In Rickettsia felis (strain ATCC VR-1525 / URRWXCal2) (Rickettsia azadi), this protein is Ribosome-recycling factor.